The chain runs to 488 residues: Aspartyl/glutamyl-tRNA(Asn/Gln) amidotransferase subunit B (488 aa).

Belongs to the GatB/GatE family. GatB subfamily. Heterotrimer of A, B and C subunits.

It catalyses the reaction L-glutamyl-tRNA(Gln) + L-glutamine + ATP + H2O = L-glutaminyl-tRNA(Gln) + L-glutamate + ADP + phosphate + H(+). The enzyme catalyses L-aspartyl-tRNA(Asn) + L-glutamine + ATP + H2O = L-asparaginyl-tRNA(Asn) + L-glutamate + ADP + phosphate + 2 H(+). Allows the formation of correctly charged Asn-tRNA(Asn) or Gln-tRNA(Gln) through the transamidation of misacylated Asp-tRNA(Asn) or Glu-tRNA(Gln) in organisms which lack either or both of asparaginyl-tRNA or glutaminyl-tRNA synthetases. The reaction takes place in the presence of glutamine and ATP through an activated phospho-Asp-tRNA(Asn) or phospho-Glu-tRNA(Gln). The protein is Aspartyl/glutamyl-tRNA(Asn/Gln) amidotransferase subunit B of Ralstonia nicotianae (strain ATCC BAA-1114 / GMI1000) (Ralstonia solanacearum).